A 309-amino-acid polypeptide reads, in one-letter code: Malate dehydrogenase (309 aa).

NAD(+) is bound by residues 9–14 (GAGFVG) and aspartate 33. Substrate contacts are provided by arginine 82 and arginine 88. NAD(+) is bound by residues asparagine 95 and 118–120 (VNN). The substrate site is built by asparagine 120 and arginine 151. Histidine 175 functions as the Proton acceptor in the catalytic mechanism.

It belongs to the LDH/MDH superfamily. MDH type 3 family.

The catalysed reaction is (S)-malate + NAD(+) = oxaloacetate + NADH + H(+). In terms of biological role, catalyzes the reversible oxidation of malate to oxaloacetate. This chain is Malate dehydrogenase, found in Roseiflexus sp. (strain RS-1).